A 373-amino-acid chain; its full sequence is MKIISEGETKLMVPEESTLSKKDTVFYNPVMETNRDISVSVVQSFLDNFKRDEFLMCDPLGGSGARGIRYANELKFNGELKVSIGDINPSAVKMIKENLKLNELENVEVFHEDANVLLSKNFKIFNVVDLDPFGSPVPYLDSGIRASLTKGGLLCMTATDTAVLCGAYRKTCIRKYNAIPLKGDKELAVRLMIGYAVKMASKYDIGLKPIFSHVTDHYARTFMVTERGAGKADSAIENLGYIRQDSEQKSFKTFEEGYEKGYAGPFYLGEISDKNIVQNSLETAKNRNYSKRAIDILELISKESKIEQVGCFDIHELCSFIKKLVPPVNDIMENLKENGFKVSRVHYNPYGLKTDAELSDLVVLISEYHSKKY.

Residues 2-365 (KIISEGETKL…AELSDLVVLI (364 aa)) form the Trm1 methyltransferase domain. The S-adenosyl-L-methionine site is built by Arg35, Arg66, Asp86, Asp113, and Ala114.

This sequence belongs to the class I-like SAM-binding methyltransferase superfamily. Trm1 family.

It carries out the reaction guanosine(26) in tRNA + 2 S-adenosyl-L-methionine = N(2)-dimethylguanosine(26) in tRNA + 2 S-adenosyl-L-homocysteine + 2 H(+). Its function is as follows. Dimethylates a single guanine residue at position 26 of a number of tRNAs using S-adenosyl-L-methionine as donor of the methyl groups. This chain is tRNA (guanine(26)-N(2))-dimethyltransferase, found in Methanococcus maripaludis (strain C7 / ATCC BAA-1331).